A 91-amino-acid polypeptide reads, in one-letter code: Large ribosomal subunit protein bL31B-1 (91 aa).

It belongs to the bacterial ribosomal protein bL31 family. Type B subfamily. As to quaternary structure, part of the 50S ribosomal subunit.

The sequence is that of Large ribosomal subunit protein bL31B-1 from Streptomyces avermitilis (strain ATCC 31267 / DSM 46492 / JCM 5070 / NBRC 14893 / NCIMB 12804 / NRRL 8165 / MA-4680).